Reading from the N-terminus, the 227-residue chain is Cytochrome c oxidase subunit 2 (227 aa).

The Mitochondrial intermembrane segment spans residues 1–26 (MATWSNFNLQNSASPLMEQIIFFHDH). The chain crosses the membrane as a helical span at residues 27 to 51 (TLVILIMITILVGYLMISLFFNSYI). The Mitochondrial matrix segment spans residues 52 to 62 (NRFLLEGQMIE). Residues 63–81 (LIWTILPAITLIFIALPSL) traverse the membrane as a helical segment. At 82-227 (RLLYLLDELN…NFINWINNYS (146 aa)) the chain is on the mitochondrial intermembrane side. Residues His-161, Cys-196, Glu-198, Cys-200, His-204, and Met-207 each contribute to the Cu cation site. Mg(2+) is bound at residue Glu-198.

This sequence belongs to the cytochrome c oxidase subunit 2 family. As to quaternary structure, component of the cytochrome c oxidase (complex IV, CIV), a multisubunit enzyme composed of a catalytic core of 3 subunits and several supernumerary subunits. The complex exists as a monomer or a dimer and forms supercomplexes (SCs) in the inner mitochondrial membrane with ubiquinol-cytochrome c oxidoreductase (cytochrome b-c1 complex, complex III, CIII). Cu cation is required as a cofactor.

Its subcellular location is the mitochondrion inner membrane. The catalysed reaction is 4 Fe(II)-[cytochrome c] + O2 + 8 H(+)(in) = 4 Fe(III)-[cytochrome c] + 2 H2O + 4 H(+)(out). In terms of biological role, component of the cytochrome c oxidase, the last enzyme in the mitochondrial electron transport chain which drives oxidative phosphorylation. The respiratory chain contains 3 multisubunit complexes succinate dehydrogenase (complex II, CII), ubiquinol-cytochrome c oxidoreductase (cytochrome b-c1 complex, complex III, CIII) and cytochrome c oxidase (complex IV, CIV), that cooperate to transfer electrons derived from NADH and succinate to molecular oxygen, creating an electrochemical gradient over the inner membrane that drives transmembrane transport and the ATP synthase. Cytochrome c oxidase is the component of the respiratory chain that catalyzes the reduction of oxygen to water. Electrons originating from reduced cytochrome c in the intermembrane space (IMS) are transferred via the dinuclear copper A center (CU(A)) of subunit 2 and heme A of subunit 1 to the active site in subunit 1, a binuclear center (BNC) formed by heme A3 and copper B (CU(B)). The BNC reduces molecular oxygen to 2 water molecules using 4 electrons from cytochrome c in the IMS and 4 protons from the mitochondrial matrix. This is Cytochrome c oxidase subunit 2 (COII) from Choristoneura fumiferana (Spruce budworm moth).